The sequence spans 403 residues: Imidazolonepropionase (403 aa).

Positions 69 and 71 each coordinate Fe(3+). 2 residues coordinate Zn(2+): histidine 69 and histidine 71. Residues arginine 78, tyrosine 141, and histidine 174 each contribute to the 4-imidazolone-5-propanoate site. Tyrosine 141 provides a ligand contact to N-formimidoyl-L-glutamate. Histidine 239 serves as a coordination point for Fe(3+). Histidine 239 contributes to the Zn(2+) binding site. Glutamine 242 is a binding site for 4-imidazolone-5-propanoate. Aspartate 314 is a binding site for Fe(3+). Residue aspartate 314 coordinates Zn(2+). N-formimidoyl-L-glutamate is bound by residues asparagine 316 and glycine 318. Serine 319 provides a ligand contact to 4-imidazolone-5-propanoate.

The protein belongs to the metallo-dependent hydrolases superfamily. HutI family. It depends on Zn(2+) as a cofactor. Fe(3+) is required as a cofactor.

It is found in the cytoplasm. The enzyme catalyses 4-imidazolone-5-propanoate + H2O = N-formimidoyl-L-glutamate. The protein operates within amino-acid degradation; L-histidine degradation into L-glutamate; N-formimidoyl-L-glutamate from L-histidine: step 3/3. In terms of biological role, catalyzes the hydrolytic cleavage of the carbon-nitrogen bond in imidazolone-5-propanoate to yield N-formimidoyl-L-glutamate. It is the third step in the universal histidine degradation pathway. In Legionella pneumophila (strain Corby), this protein is Imidazolonepropionase.